A 1516-amino-acid polypeptide reads, in one-letter code: Lysine-specific demethylase 5C (1516 aa).

The 42-residue stretch at cysteine 14–proline 55 folds into the JmjN domain. An ARID domain is found at phenylalanine 24 to serine 128. Residues asparagine 142–proline 151 are compositionally biased toward basic and acidic residues. Positions asparagine 142–isoleucine 186 are disordered. The segment covering leucine 156–asparagine 166 has biased composition (polar residues). Residues lysine 164, lysine 188, lysine 203, and lysine 233 each participate in a glycyl lysine isopeptide (Lys-Gly) (interchain with G-Cter in SUMO2) cross-link. Residues leucine 216 to glutamate 262 are disordered. Residues valine 232–valine 242 are compositionally biased toward basic and acidic residues. Serine 246 bears the Phosphoserine mark. Lysine 254 is covalently cross-linked (Glycyl lysine isopeptide (Lys-Gly) (interchain with G-Cter in SUMO2)). Phosphoserine is present on residues serine 260 and serine 276. Residues serine 283 to alanine 333 form a PHD-type 1 zinc finger. Tyrosine 399 contacts 2-oxoglutarate. The JmjC domain maps to glutamate 427–arginine 593. Fe cation is bound by residues histidine 473 and glutamate 475. Residues serine 481, asparagine 483, and lysine 491 each coordinate 2-oxoglutarate. Histidine 561 lines the Fe cation pocket. The segment at cysteine 666–methionine 718 adopts a C5HC2 zinc-finger fold. Serine 852 and serine 856 each carry phosphoserine. Residue lysine 1086 forms a Glycyl lysine isopeptide (Lys-Gly) (interchain with G-Cter in SUMO2) linkage. The PHD-type 2 zinc-finger motif lies at threonine 1144–serine 1209. The interval leucine 1274–lysine 1305 is disordered. Residues proline 1294 to proline 1304 show a composition bias toward basic and acidic residues. Serine 1318 is modified (phosphoserine). The disordered stretch occupies residues glutamate 1400–leucine 1516. Residues serine 1404–valine 1419 are compositionally biased toward basic residues. Basic and acidic residues predominate over residues aspartate 1420–arginine 1437. The segment covering glutamate 1444 to glycine 1459 has biased composition (acidic residues). Polar residues-rich tracts occupy residues glycine 1471–glycine 1481 and serine 1489–threonine 1500.

This sequence belongs to the JARID1 histone demethylase family. As to quaternary structure, part of two distinct complexes, one containing E2F6, and the other containing REST. Interacts with ZMYND8. The cofactor is Fe(2+).

Its subcellular location is the nucleus. The enzyme catalyses N(6),N(6),N(6)-trimethyl-L-lysyl(4)-[histone H3] + 3 2-oxoglutarate + 3 O2 = L-lysyl(4)-[histone H3] + 3 formaldehyde + 3 succinate + 3 CO2. Histone demethylase that specifically demethylates 'Lys-4' of histone H3, thereby playing a central role in histone code. Does not demethylate histone H3 'Lys-9', H3 'Lys-27', H3 'Lys-36', H3 'Lys-79' or H4 'Lys-20'. Demethylates trimethylated and dimethylated but not monomethylated H3 'Lys-4'. Participates in transcriptional repression of neuronal genes by recruiting histone deacetylases and REST at neuron-restrictive silencer elements. This is Lysine-specific demethylase 5C (KDM5C) from Sus scrofa (Pig).